The primary structure comprises 183 residues: MTTIVSVRRNNKVVIAGDGQVSLGNTVMKGNARKVRRLYNNKVLAGFAGGTADAFTLFERFESKLQMHQGHLTKAAVELAKDWRSDRALRKLEALLAVADETASLIITGNGDVVQPENDLIAIGSGGAYAQAAATALLENTDLDAREIAEKALNIAGDICVFTNHHHTVEELDSTTEPETPAA.

The active site involves Thr-2. Positions 157, 160, and 163 each coordinate Na(+).

This sequence belongs to the peptidase T1B family. HslV subfamily. A double ring-shaped homohexamer of HslV is capped on each side by a ring-shaped HslU homohexamer. The assembly of the HslU/HslV complex is dependent on binding of ATP.

The protein resides in the cytoplasm. The enzyme catalyses ATP-dependent cleavage of peptide bonds with broad specificity.. Its activity is regulated as follows. Allosterically activated by HslU binding. Protease subunit of a proteasome-like degradation complex believed to be a general protein degrading machinery. The polypeptide is ATP-dependent protease subunit HslV (Vibrio parahaemolyticus serotype O3:K6 (strain RIMD 2210633)).